Here is a 286-residue protein sequence, read N- to C-terminus: Aquaporin PIP1-3 (286 aa).

Residue M1 is modified to N-acetylmethionine. Residues 1 to 33 form a disordered region; that stretch reads MEGKEEDVRVGANKFPERQPIGTSAQTDKDYKE. At 1–54 the chain is on the cytoplasmic side; sequence MEGKEEDVRVGANKFPERQPIGTSAQTDKDYKEPPPAPFFEPGELSSWSFYRAG. Residues 55–75 traverse the membrane as a helical segment; that stretch reads IAEFIATFLFLYITVLTVMGV. Residues 76-81 are Extracellular-facing; the sequence is KRAPNM. Residues 82-102 form a helical membrane-spanning segment; it reads CASVGIQGIAWAFGGMIFALV. At 103–132 the chain is on the cytoplasmic side; it reads YCTAGISGGHINPAVTFGLFLARKLSLTRA. Positions 114–116 match the NPA 1 motif; that stretch reads NPA. Residues 133–153 form a helical membrane-spanning segment; it reads VFYIVMQCLGAICGAGVVKGF. Topologically, residues 154–174 are extracellular; the sequence is QPNPYQTLGGGANTVAHGYTK. The chain crosses the membrane as a helical span at residues 175 to 195; the sequence is GSGLGAEIIGTFVLVYTVFSA. The Cytoplasmic portion of the chain corresponds to 196–208; it reads TDAKRSARDSHVP. The chain crosses the membrane as a helical span at residues 209-229; that stretch reads ILAPLPIGFAVFLVHLATIPI. The Extracellular portion of the chain corresponds to 230–256; it reads TGTGINPARSLGAAIIYNKDHAWDDHW. The NPA 2 motif lies at 235–237; sequence NPA. A helical membrane pass occupies residues 257–277; the sequence is IFWVGPFIGAALAALYHQLVI. At 278–286 the chain is on the cytoplasmic side; sequence RAIPFKSRS. Residue S284 is modified to Phosphoserine.

This sequence belongs to the MIP/aquaporin (TC 1.A.8) family. PIP (TC 1.A.8.11) subfamily. As to expression, expressed in roots, above ground, ripening fruit, flower buds, green siliques and senescing leaves.

The protein localises to the cell membrane. Water channel required to facilitate the transport of water across cell membrane. Its function is impaired by Hg(2+). In Arabidopsis thaliana (Mouse-ear cress), this protein is Aquaporin PIP1-3 (PIP1-3).